The chain runs to 379 residues: Chaperone protein DnaJ (379 aa).

Residues 5–70 (DYYEVLGVQK…QKRAAYDRFG (66 aa)) enclose the J domain. Residues 137-215 (GATTTVRVPT…CGGQGRVRKE (79 aa)) form a CR-type zinc finger. Zn(2+) is bound by residues cysteine 150, cysteine 153, cysteine 167, cysteine 170, cysteine 189, cysteine 192, cysteine 203, and cysteine 206. CXXCXGXG motif repeat units follow at residues 150–157 (CESCNGTG), 167–174 (CPTCNGHG), 189–196 (CPACHGVG), and 203–210 (CRTCGGQG).

Belongs to the DnaJ family. Homodimer. Zn(2+) serves as cofactor.

Its subcellular location is the cytoplasm. Functionally, participates actively in the response to hyperosmotic and heat shock by preventing the aggregation of stress-denatured proteins and by disaggregating proteins, also in an autonomous, DnaK-independent fashion. Unfolded proteins bind initially to DnaJ; upon interaction with the DnaJ-bound protein, DnaK hydrolyzes its bound ATP, resulting in the formation of a stable complex. GrpE releases ADP from DnaK; ATP binding to DnaK triggers the release of the substrate protein, thus completing the reaction cycle. Several rounds of ATP-dependent interactions between DnaJ, DnaK and GrpE are required for fully efficient folding. Also involved, together with DnaK and GrpE, in the DNA replication of plasmids through activation of initiation proteins. The sequence is that of Chaperone protein DnaJ from Rhodospirillum centenum (strain ATCC 51521 / SW).